The primary structure comprises 347 residues: NADH-ubiquinone oxidoreductase chain 2 (347 aa).

A run of 11 helical transmembrane segments spans residues 1–21 (MNPAIFTTIILTMILGTMIVT), 25–45 (HWLTVWIGFEMNMLAIIPILM), 59–79 (YFLTQATASMLLMLAITINLV), 96–116 (ITMTLAMAMKLGLSPFHFWVP), 127–147 (GLILLTWQKLAPMSILYQISP), 149–169 (INLELLLMMAILSIAIGGWGG), 178–198 (IMAYSSIAHMGWMTAIMAYNP), 201–221 (TLLNLXVYILLTTTXFMMLML), 240–260 (LATTILLIMLSLGGLPPLSGF), 274–294 (DSIIMPTIMAMAALLNLYFYM), and 326–346 (ISPLIILSTLXLPLSPMLTLL).

The protein belongs to the complex I subunit 2 family. Core subunit of respiratory chain NADH dehydrogenase (Complex I) which is composed of 45 different subunits. Interacts with TMEM242.

Its subcellular location is the mitochondrion inner membrane. The catalysed reaction is a ubiquinone + NADH + 5 H(+)(in) = a ubiquinol + NAD(+) + 4 H(+)(out). Its function is as follows. Core subunit of the mitochondrial membrane respiratory chain NADH dehydrogenase (Complex I) which catalyzes electron transfer from NADH through the respiratory chain, using ubiquinone as an electron acceptor. Essential for the catalytic activity and assembly of complex I. In Dobsonia minor (Lesser bare-backed fruit bat), this protein is NADH-ubiquinone oxidoreductase chain 2.